Here is a 485-residue protein sequence, read N- to C-terminus: MSPQTETKASVGFKAGVKDYKLTYYTPEYETKDTDILAAFRVTPQPGVPPEEAGAAVAAESSTGTWTTVWTDGLTSLDRYKGRCYGIEPVPGEDNQYIAYVAYPLDLFEEGSVTNMFTSIVGNVFGFKALRALRLEDLRIPTAYVKTFEGPPHGIQVERDKLNKYGRPLLGCTIKPKLGLSAKNYGRACYECLRGGLDFTKDDENVNSQPFMRWRDRFLFCAEAIYKAQAETGEIKGHYLNATAGTCEEMLKRAVFARELGVPIVMHDYLTGGFTANTSLSHYCRDNGLLLHIHRAMHAVIDRQKNHGMHFRVLAKALRMSGGDHIHSGTVVGKLEGEREITLGFVDLLRDDFIEKDRSRGIYFTQDWVSLPGVLPVASGGIHVWHMPALTEIFGDDSVLQFGGGTLGHPWGNAPGAVANRVALEACVQARNEGRDLATEGNEIIREATKWSPELAAACEVWKEIKFEFQAMDTLDTDKDKDKKR.

The propeptide occupies 1–2 (MS). At proline 3 the chain carries N-acetylproline. Position 14 is an N6,N6,N6-trimethyllysine (lysine 14). Asparagine 123 and threonine 173 together coordinate substrate. Lysine 175 acts as the Proton acceptor in catalysis. Lysine 177 serves as a coordination point for substrate. Lysine 201, aspartate 203, and glutamate 204 together coordinate Mg(2+). Lysine 201 bears the N6-carboxylysine mark. Histidine 294 serves as the catalytic Proton acceptor. Arginine 295, histidine 327, and serine 379 together coordinate substrate.

Belongs to the RuBisCO large chain family. Type I subfamily. In terms of assembly, heterohexadecamer of 8 large chains and 8 small chains; disulfide-linked. The disulfide link is formed within the large subunit homodimers. Mg(2+) is required as a cofactor. Post-translationally, the disulfide bond which can form in the large chain dimeric partners within the hexadecamer appears to be associated with oxidative stress and protein turnover.

It is found in the plastid. It localises to the chloroplast. The catalysed reaction is 2 (2R)-3-phosphoglycerate + 2 H(+) = D-ribulose 1,5-bisphosphate + CO2 + H2O. It catalyses the reaction D-ribulose 1,5-bisphosphate + O2 = 2-phosphoglycolate + (2R)-3-phosphoglycerate + 2 H(+). Its function is as follows. RuBisCO catalyzes two reactions: the carboxylation of D-ribulose 1,5-bisphosphate, the primary event in carbon dioxide fixation, as well as the oxidative fragmentation of the pentose substrate in the photorespiration process. Both reactions occur simultaneously and in competition at the same active site. This chain is Ribulose bisphosphate carboxylase large chain, found in Flaveria pringlei.